Reading from the N-terminus, the 224-residue chain is Glutathione S-transferase U8 (224 aa).

The GST N-terminal domain maps to glutamate 5–histidine 85. Residues serine 15 to proline 16, asparagine 42 to arginine 43, lysine 56 to valine 57, and glutamate 69 to serine 70 each bind glutathione. Residues aspartate 91–valine 213 enclose the GST C-terminal domain. A Phosphothreonine modification is found at threonine 152.

Belongs to the GST superfamily. Tau family.

Its subcellular location is the cytoplasm. The protein localises to the cytosol. It carries out the reaction RX + glutathione = an S-substituted glutathione + a halide anion + H(+). In terms of biological role, may be involved in the conjugation of reduced glutathione to a wide number of exogenous and endogenous hydrophobic electrophiles and have a detoxification role against certain herbicides. This Arabidopsis thaliana (Mouse-ear cress) protein is Glutathione S-transferase U8 (GSTU8).